A 95-amino-acid chain; its full sequence is Large ribosomal subunit protein bL25 (95 aa).

This sequence belongs to the bacterial ribosomal protein bL25 family. In terms of assembly, part of the 50S ribosomal subunit; part of the 5S rRNA/L5/L18/L25 subcomplex. Contacts the 5S rRNA. Binds to the 5S rRNA independently of L5 and L18.

Functionally, this is one of the proteins that binds to the 5S RNA in the ribosome where it forms part of the central protuberance. This is Large ribosomal subunit protein bL25 from Haemophilus influenzae (strain 86-028NP).